Reading from the N-terminus, the 1159-residue chain is CRISPR-associated endoribonuclease Cas13a (1159 aa).

The tract at residues 1–11 (MKVTKVGGISH) is binds crRNA repeat and spacer. Residues 1-170 (MKVTKVGGIS…NNIEKVEGKS (170 aa)) are NTD. Binds crRNA repeat stretches follow at residues 139–151 (NKIN…FEKN), 172–176 (RNIIY), 224–233 (REFYHEIIGR), 271–276 (QVFYKY), 294–297 (HFVE), and 301–305 (SQLLK). The helical-1 stretch occupies residues 171 to 360 (KRNIIYDYYR…YNYYLQDGEI (190 aa)). Positions 319-328 (KIKRIFEYQN) are binds crRNA processing site. 2 binds crRNA repeat regions span residues 336–340 (KLLNK) and 371–378 (QNEAFLRN). Residues 361 to 508 (ATSDFIARNR…SKKMFQNEIN (148 aa)) are HEPN-like fold 1-I. Catalysis depends on for target RNA cleavage residues arginine 472 and histidine 477. The interval 509–751 (EKKLKLKIFR…EFLREIKLGN (243 aa)) is helical-2. Residues 519-522 (QLNS) form a binds target RNA region. Positions 547 to 558 (NKNIPFVPSFTK) are binds crRNA spacer. Residues 590-597 (DAQIYLLK) form a binds target RNA region. The binds crRNA spacer stretch occupies residues 718-722 (KQEFD). An HEPN-like fold 1-II region spans residues 752–813 (ILKYTERLNM…NLDNNRVTED (62 aa)). The interval 780 to 783 (SLEK) is binds crRNA repeat. Residues 804–810 (NLDNNRV) are binds crRNA spacer and target RNA. Residues 814 to 946 (FELEADEIGK…EYTHLKNKVE (133 aa)) form a linker region. Binds crRNA spacer stretches follow at residues 845-857 (KIYF…IKHR) and 938-942 (YTHLK). Residues 880-946 (YKISIEELKK…EYTHLKNKVE (67 aa)) adopt a coiled-coil conformation. The HEPN-like fold 2 stretch occupies residues 947 to 1159 (FNELNLLQGL…YKMEEKKSEN (213 aa)). A binds crRNA repeat region spans residues 962 to 963 (HR). A binds 3'-end of target RNA, in adjacent protein region spans residues 995–998 (FENK). Residues arginine 1048 and histidine 1053 each act as for target RNA cleavage in the active site. Binds crRNA processing site regions lie at residues 1072–1082 (RKLLSYDRKLK) and 1104–1108 (IGADK).

Belongs to the CRISPR-associated endoribonuclease Cas13a family. Crystals show the 3'-end of target RNA interacting with an adjacent protein molecule, and mutagenesis of those amino acid residues decreases target RNA cleavage, but it is not clear if this is physiological. The cofactor is a divalent metal cation.

Target RNA acts as an activator for non-specific ssRNA cleavage; the target RNA and complementary crRNA must both be at least 20 nucleotides long to activate the HEPN-like catalytic pocket for RNase activity. Its function is as follows. CRISPR (clustered regularly interspaced short palindromic repeat), is an adaptive immune system that provides protection against mobile genetic elements (viruses, transposable elements and conjugative plasmids). CRISPR clusters contain sequences complementary to antecedent mobile elements (spacer sequences) and target invading nucleic acids. Unlike many single-component effectors, this CRISPR-Cas system targets RNA. CRISPR clusters are transcribed from pre-CRISPR RNA (crRNA) and processed into crRNA by this protein. pre-crRNA processing yields a 5'-OH and probably a 2',3'-cyclic phosphate. Also cleaves pre-crRNA from several other type VI-A CRISPR systems. Cleaves linear target ssRNA in a crRNA-dependent fashion, preferentially before U residues. Cleavage of target ssRNA is about 80-fold faster than pre-crRNA processing and uses a different active site. Binding a viable target RNA target activates this protein for non-specific RNA degradation in vitro (called collateral RNA degradation). Activation occurs with 10 fM target RNA. crRNA maturation is not essential for activation of RNA degradation, but lack of mature crRNA (due to mutagenesis) decreases activation levels. This system has a 3' protospacer flanking site in the target RNA (PFS), which is C and unavailable to base pair with crRNA (PFS is equivalent to PAM, the protospacer adjacent motif). The chain is CRISPR-associated endoribonuclease Cas13a from Leptotrichia buccalis (strain ATCC 14201 / DSM 1135 / JCM 12969 / NCTC 10249 / C-1013-b).